The following is a 230-amino-acid chain: uncharacterized protein (230 aa).

A helical membrane pass occupies residues 7 to 23; it reads LFTASILSLGYLVFICG. The tract at residues 27-230 is disordered; the sequence is KPKPTASTES…VKTEGTLKKN (204 aa). Residues 50–59 show a composition bias toward low complexity; it reads AVPQKPAAPA. Residues 60-83 show a composition bias toward basic and acidic residues; it reads AEEKAPVDPKDPKSKDVDEAKKPD. Basic residues predominate over residues 101–112; it reads KKSKKSEKSKKK. Basic and acidic residues predominate over residues 113-173; it reads KTEEKVMSED…KEKSKDETVP (61 aa). A compositionally biased stretch (acidic residues) spans 199 to 210; sequence ETDEFPTIDEDA. The span at 211–230 shows a compositional bias: basic and acidic residues; sequence EKTKKTEKKDVKTEGTLKKN.

It localises to the membrane. This is an uncharacterized protein from Caenorhabditis elegans.